A 162-amino-acid polypeptide reads, in one-letter code: Fibroblast growth factor 22 (162 aa).

An N-terminal signal peptide occupies residues 1 to 22 (MRSRLWLGLAWLLLARAPGAPG).

Belongs to the heparin-binding growth factors family. Interacts with FGFR1 and FGFR2. Interacts with FGFBP1. In terms of tissue distribution, preferentially expressed in skin; low expression in brain. Expressed in the inner root sheath of the hair follicle.

It is found in the secreted. Functionally, plays a role in the fasting response, glucose homeostasis, lipolysis and lipogenesis. Can stimulate cell proliferation (in vitro). May be involved in hair development. The polypeptide is Fibroblast growth factor 22 (Fgf22) (Mus musculus (Mouse)).